Here is a 189-residue protein sequence, read N- to C-terminus: Ras-like protein 1 (189 aa).

A GTP-binding site is contributed by glycine 10–serine 17. The short motif at tyrosine 32–tyrosine 40 is the Effector region element. Residues aspartate 57–glutamine 61 and asparagine 116–aspartate 119 contribute to the GTP site. Cysteine methyl ester is present on cysteine 186. The S-geranylgeranyl cysteine moiety is linked to residue cysteine 186. A propeptide spans lysine 187–leucine 189 (removed in mature form).

It belongs to the small GTPase superfamily. Ras family.

It localises to the cell membrane. The enzyme catalyses GTP + H2O = GDP + phosphate + H(+). Its activity is regulated as follows. Alternates between an inactive form bound to GDP and an active form bound to GTP. Activated by a guanine nucleotide-exchange factor (GEF) and inactivated by a GTPase-activating protein (GAP). Functionally, ras proteins bind GDP/GTP and possess intrinsic GTPase activity. Plays a role in eye development by regulating cell growth, survival of postmitotic ommatidial cells and differentiation of photoreceptor cells. During larval development, mediates Ptth/tor signaling leading to the production of ecdysone, a hormone required for the initiation of metamorphosis. The chain is Ras-like protein 1 from Drosophila willistoni (Fruit fly).